The primary structure comprises 134 residues: Estradiol 17-beta-dehydrogenase 8 (134 aa).

Serine 38 contributes to the substrate binding site. The residue at position 42 (lysine 42) is an N6-succinyllysine. Tyrosine 51 serves as the catalytic Proton acceptor. NAD(+) is bound by residues 51–55 and 84–86; these read YAASK and IAT. The residue at position 55 (lysine 55) is an N6-succinyllysine.

It belongs to the short-chain dehydrogenases/reductases (SDR) family. Heterotetramer with CBR4; contains two molecules of HSD17B8 and CBR4.

Its subcellular location is the mitochondrion matrix. It carries out the reaction 17beta-estradiol + NAD(+) = estrone + NADH + H(+). It catalyses the reaction 17beta-estradiol + NADP(+) = estrone + NADPH + H(+). The catalysed reaction is testosterone + NAD(+) = androst-4-ene-3,17-dione + NADH + H(+). It functions in the pathway steroid biosynthesis; estrogen biosynthesis. It participates in lipid metabolism; fatty acid biosynthesis. In terms of biological role, NAD-dependent 17-beta-hydroxysteroid dehydrogenase with highest activity towards estradiol. Has very low activity towards testosterone. The heterotetramer with CBR4 has NADH-dependent 3-ketoacyl-acyl carrier protein reductase activity, and thereby plays a role in mitochondrial fatty acid biosynthesis. Within the heterotetramer, HSD17B8 binds NADH; CBR4 binds NADPD. The sequence is that of Estradiol 17-beta-dehydrogenase 8 (HSD17B8) from Callithrix jacchus (White-tufted-ear marmoset).